We begin with the raw amino-acid sequence, 222 residues long: Cytidylate kinase 2 (222 aa).

Residue Gly-7 to Thr-15 coordinates ATP.

This sequence belongs to the cytidylate kinase family. Type 1 subfamily.

The protein localises to the cytoplasm. The catalysed reaction is CMP + ATP = CDP + ADP. The enzyme catalyses dCMP + ATP = dCDP + ADP. This Haemophilus influenzae (strain ATCC 51907 / DSM 11121 / KW20 / Rd) protein is Cytidylate kinase 2.